Here is a 379-residue protein sequence, read N- to C-terminus: Inositol 3-kinase (379 aa).

Residues Ser-217, 267–270 (GAGD), and Asn-294 each bind ATP. Asp-270 acts as the Proton acceptor in catalysis.

Belongs to the carbohydrate kinase pfkB family.

The catalysed reaction is myo-inositol + ATP = 1D-myo-inositol 3-phosphate + ADP + H(+). In terms of biological role, kinase that phosphorylates myo-inositol to produce multiple myo-inositol monophosphates, Ins(1)P, Ins(3)P, Ins(4)P, Ins(5)P and Ins(6)P. Participates in phytic acid biosynthesis in developing seeds. Phytic acid is the primary storage form of phosphorus in cereal grains and other plant seeds. The chain is Inositol 3-kinase from Zea mays (Maize).